The following is a 360-amino-acid chain: Protein RecA (360 aa).

An ATP-binding site is contributed by 65–72; sequence GPESSGKT.

Belongs to the RecA family.

Its subcellular location is the cytoplasm. In terms of biological role, can catalyze the hydrolysis of ATP in the presence of single-stranded DNA, the ATP-dependent uptake of single-stranded DNA by duplex DNA, and the ATP-dependent hybridization of homologous single-stranded DNAs. It interacts with LexA causing its activation and leading to its autocatalytic cleavage. The polypeptide is Protein RecA (Tolumonas auensis (strain DSM 9187 / NBRC 110442 / TA 4)).